Reading from the N-terminus, the 444-residue chain is Ribitol-5-phosphate xylosyltransferase 1 (444 aa).

Residues 1–9 lie on the Cytoplasmic side of the membrane; that stretch reads MRLTRTRLC. A helical; Signal-anchor for type II membrane protein transmembrane segment spans residues 10 to 30; it reads SLLVALYCLFSIYAAYHVFFG. Residues 31–444 lie on the Extracellular side of the membrane; sequence RRRRPLGTTS…ESSFFINNKV (414 aa). Residues 38–79 are disordered; sequence TTSRNSRKAAAAQAKERRGREQSALESEEWNPWEGDEKNEQR. Basic and acidic residues predominate over residues 51 to 60; that stretch reads AKERRGREQS.

The protein belongs to the RXYLT1 family. In terms of assembly, forms a complex composed of FKTN/fukutin, FKRP and RXYLT1/TMEM5.

The protein localises to the golgi apparatus membrane. It carries out the reaction 3-O-[Rib-ol-P-Rib-ol-P-3-beta-D-GalNAc-(1-&gt;3)-beta-D-GlcNAc-(1-&gt;4)-(O-6-P-alpha-D-Man)]-Thr-[protein] + UDP-alpha-D-xylose = 3-O-[beta-D-Xyl-(1-&gt;4)-Rib-ol-P-Rib-ol-P-3-beta-D-GalNAc-(1-&gt;3)-beta-D-GlcNAc-(1-&gt;4)-(O-6-P-alpha-D-Man)]-Thr-[protein] + UDP + H(+). It participates in protein modification; protein glycosylation. In terms of biological role, acts as a UDP-D-xylose:ribitol-5-phosphate beta1,4-xylosyltransferase, which catalyzes the transfer of UDP-D-xylose to ribitol 5-phosphate (Rbo5P) to form the Xylbeta1-4Rbo5P linkage on O-mannosyl glycan. Participates in the biosynthesis of the phosphorylated O-mannosyl trisaccharide (N-acetylgalactosamine-beta-3-N-acetylglucosamine-beta-4-(phosphate-6-)mannose), a carbohydrate structure present in alpha-dystroglycan (DAG1), which is required for binding laminin G-like domain-containing extracellular proteins with high affinity. The polypeptide is Ribitol-5-phosphate xylosyltransferase 1 (Mus musculus (Mouse)).